A 315-amino-acid chain; its full sequence is Protein OPG185 (315 aa).

The signal sequence occupies residues 1-16 (MARLPILLLLISLVYS). In terms of domain architecture, Ig-like V-type spans 17–121 (TPSPQTSKKI…NDTDKVDYEE (105 aa)). The Virion surface segment spans residues 17–279 (TPSPQTSKKI…SNYKTKDFVE (263 aa)). The cysteines at positions 34 and 103 are disulfide-linked. N-linked (GlcNAc...) asparagine; by host glycosylation is found at N37, N69, N112, and N161. The span at 192-202 (INTVSASSGES) shows a compositional bias: polar residues. The interval 192–214 (INTVSASSGESTTDETPEPITDK) is disordered. N-linked (GlcNAc...) asparagine; by host glycosylation is present at N254. A helical transmembrane segment spans residues 280 to 303 (IFGITALIILSAVAIFCITYYIYN). Topologically, residues 304–315 (KRSRKYKTENKV) are intravirion.

It belongs to the orthopoxvirus OPG185 family. Heterodimerizes with OPG040. The heterodimer OPG185-OPG040 interacts with components of the entry fusion complex OPG143 and OPG094. Heterodimer with C3/VPC protein; disulfide-linked. Glycosylated; contains phosphate and sulfate-substituted glycans. O-glycosylation is required for hemagglutination and hemadsorption activities of infected cell membranes.

It is found in the virion membrane. Its subcellular location is the host membrane. Prevents cell to cell fusion by interacting with and directing the viral OPG040 protein on the host plasma membrane. The OPG185-OPG040 complex associates with components of the entry fusion complex (EFC) presumably to avoid superinfection and syncytium formation. Via its interaction with C3/VCP protein, protects the infected cell and probably also the extracellular enveloped virus from complement attack. This is Protein OPG185 (OPG185) from Vaccinia virus (strain Tian Tan) (VACV).